The primary structure comprises 427 residues: Histidine--tRNA ligase (427 aa).

This sequence belongs to the class-II aminoacyl-tRNA synthetase family. As to quaternary structure, homodimer.

The protein localises to the cytoplasm. The enzyme catalyses tRNA(His) + L-histidine + ATP = L-histidyl-tRNA(His) + AMP + diphosphate + H(+). This is Histidine--tRNA ligase from Streptococcus suis (strain 98HAH33).